The primary structure comprises 134 residues: Small ribosomal subunit protein uS8c (134 aa).

It belongs to the universal ribosomal protein uS8 family. As to quaternary structure, part of the 30S ribosomal subunit.

The protein resides in the plastid. The protein localises to the chloroplast. One of the primary rRNA binding proteins, it binds directly to 16S rRNA central domain where it helps coordinate assembly of the platform of the 30S subunit. In Phaseolus vulgaris (Kidney bean), this protein is Small ribosomal subunit protein uS8c (rps8).